The chain runs to 75 residues: Small ribosomal subunit protein bS18 (75 aa).

The protein belongs to the bacterial ribosomal protein bS18 family. Part of the 30S ribosomal subunit. Forms a tight heterodimer with protein bS6.

Functionally, binds as a heterodimer with protein bS6 to the central domain of the 16S rRNA, where it helps stabilize the platform of the 30S subunit. In Idiomarina loihiensis (strain ATCC BAA-735 / DSM 15497 / L2-TR), this protein is Small ribosomal subunit protein bS18.